A 744-amino-acid polypeptide reads, in one-letter code: MDHAEENEIPAETQRYYVERPIFSHPVLQERLHVKDKVTESIGDKLKQAFTCTPKKIRNIIYMFLPITKWLPAYKFKEYVLGDLVSGISTGVLQLPQGLAFAMLAAVPPVFGLYSSFYPVIMYCFFGTSRHISIGPFAVISLMIGGVAVRLVPDDIVIPGGVNATNGTEARDALRVKVAMSVTLLSGIIQFCLGVCRFGFVAIYLTEPLVRGFTTAAAVHVFTSMLKYLFGVKTKRYSGIFSVVYSTVAVLQNVKNLNVCSLGVGLMVFGLLLGGKEFNERFKEKLPAPIPLEFFAVVMGTGISAGFNLHESYSVDVVGTLPLGLLPPANPDTSLFHLVYVDAIAIAIVGFSVTISMAKTLANKHGYQVDGNQELIALGICNSIGSLFQTFSISCSLSRSLVQEGTGGKTQLAGCLASLMILLVILATGFLFESLPQAVLSAIVIVNLKGMFMQFSDLPFFWRTSKIELTIWLTTFVSSLFLGLDYGLITAVIIALLTVIYRTQSPSYKVLGQLPDTDVYIDIDAYEEVKEIPGIKIFQINAPIYYANSDLYSSALKRKTGVNPALIMGARRKAMRKYAKEVGNANVANATVVKVDAEVDGENATKPEEEDDEVKFPPIVIKTTFPEELQRFLPQGENVHTVILDFTQVNFVDSVGVKTLAGIVKEYGDVGIYVYLAGCSPQVVNDLTRNNFFENPALKELLFHSIHDAVLGSQVREAMAEQEATASLPQEDMEPNATPTTPEA.

Topologically, residues 1–75 are cytoplasmic; sequence MDHAEENEIP…PITKWLPAYK (75 aa). The helical transmembrane segment at 76–105 threads the bilayer; the sequence is FKEYVLGDLVSGISTGVLQLPQGLAFAMLA. The Extracellular portion of the chain corresponds to 106-108; it reads AVP. A helical transmembrane segment spans residues 109–126; that stretch reads PVFGLYSSFYPVIMYCFF. Over 127 to 137 the chain is Cytoplasmic; it reads GTSRHISIGPF. A helical transmembrane segment spans residues 138 to 151; the sequence is AVISLMIGGVAVRL. At 152 to 168 the chain is on the extracellular side; it reads VPDDIVIPGGVNATNGT. The short motif at 158 to 168 is the Involved in motor function element; that stretch reads IPGGVNATNGT. Residues Asn163 and Asn166 are each glycosylated (N-linked (GlcNAc...) asparagine). The helical transmembrane segment at 169 to 196 threads the bilayer; that stretch reads EARDALRVKVAMSVTLLSGIIQFCLGVC. Over 197–206 the chain is Cytoplasmic; the sequence is RFGFVAIYLT. A helical membrane pass occupies residues 207–230; the sequence is EPLVRGFTTAAAVHVFTSMLKYLF. Residues 231–241 are Extracellular-facing; sequence GVKTKRYSGIF. The segment at residues 242 to 253 is an intramembrane region (helical); it reads SVVYSTVAVLQN. Over 254 to 258 the chain is Extracellular; that stretch reads VKNLN. Residues 259-282 form a helical membrane-spanning segment; that stretch reads VCSLGVGLMVFGLLLGGKEFNERF. The Cytoplasmic segment spans residues 283–291; sequence KEKLPAPIP. A helical transmembrane segment spans residues 292–307; sequence LEFFAVVMGTGISAGF. Residues 308–332 are Extracellular-facing; the sequence is NLHESYSVDVVGTLPLGLLPPANPD. A helical membrane pass occupies residues 333 to 367; it reads TSLFHLVYVDAIAIAIVGFSVTISMAKTLANKHGY. Residues 368-370 are Cytoplasmic-facing; that stretch reads QVD. Residues 371 to 388 traverse the membrane as a helical segment; that stretch reads GNQELIALGICNSIGSLF. Topologically, residues 389–396 are extracellular; the sequence is QTFSISCS. A helical transmembrane segment spans residues 397 to 406; that stretch reads LSRSLVQEGT. Ser398 contributes to the salicylate binding site. At 407 to 410 the chain is on the cytoplasmic side; that stretch reads GGKT. The chain crosses the membrane as a helical span at residues 411 to 432; that stretch reads QLAGCLASLMILLVILATGFLF. Topologically, residues 433–436 are extracellular; it reads ESLP. A helical membrane pass occupies residues 437-464; the sequence is QAVLSAIVIVNLKGMFMQFSDLPFFWRT. Residue Ser465 is a topological domain, cytoplasmic. The helical transmembrane segment at 466–481 threads the bilayer; that stretch reads KIELTIWLTTFVSSLF. Over 482-483 the chain is Extracellular; sequence LG. A helical transmembrane segment spans residues 484–504; that stretch reads LDYGLITAVIIALLTVIYRTQ. The extended region for STAS domain stretch occupies residues 505 to 718; it reads SPSYKVLGQL…AVLGSQVREA (214 aa). The Cytoplasmic segment spans residues 505 to 744; it reads SPSYKVLGQL…PNATPTTPEA (240 aa). Positions 525–713 constitute an STAS domain; that stretch reads AYEEVKEIPG…HSIHDAVLGS (189 aa). The segment at 720 to 744 is disordered; sequence AEQEATASLPQEDMEPNATPTTPEA.

Belongs to the SLC26A/SulP transporter (TC 2.A.53) family. Homodimer. Interacts (via STAS domain) with CALM; this interaction is calcium-dependent and the STAS domain interacts with only one lobe of CALM which is an elongated conformation. Interacts with MYH1. Expressed in the outer hair cells (OHC) of the organ of Corti of the inner ear. Also weak expression in brain and testis. Very weakly expressed in heart, spleen, muscle and lactating mammary glands. Expressed in cardiac myocytes (at protein level), both in the surface sarcolemma and along the t-tubule. Weakly expressed in skeletal muscle cells (at protein level).

The protein localises to the lateral cell membrane. It carries out the reaction 2 hydrogencarbonate(in) + chloride(out) = 2 hydrogencarbonate(out) + chloride(in). Functionally, voltage-sensitive motor protein that drives outer hair cell (OHC) electromotility (eM) and participates in sound amplification in the hearing organ. Converts changes in the transmembrane electric potential into mechanical displacements resulting in the coupling of its expansion to movement of a charged voltage sensor across the lipid membrane. The nature of the voltage sensor is not completely clear, and two models compete. In the first model, acts as an incomplete transporter where intracellular chloride anion acts as extrinsic voltage sensor that drives conformational change in the protein which is sufficient to produce a length change in the plane of the membrane and hence in the length of the OHC. The second model in which multiple charged amino acid residues are distributed at the intracellular and extracellular membrane interfaces that form an intrinsic voltage sensor, whose movement produces the non-linear capacitance (NLC). However, the effective voltage sensor may be the result of a hybrid voltage sensor, assembled from intrinsic charge (charged residues) and extrinsic charge (bound anion). Notably, binding of anions to the anion-binding pocket partially neutralizes the intrinsic positive charge rather than to form an electrically negative sensor, therefore remaining charge may serve as voltage sensor that, after depolarization, moves from down (expanded state) to up (contracted) conformation, which is accompanied by an eccentric contraction of the intermembrane cross-sectional area of the protein as well as a major increase in the hydrophobic thickness of the protein having as consequences the plasma membrane thickening and the cell contraction after membrane depolarization. The anion-binding pocket transits from the inward-open (Down) state, where it is exposed toward the intracellular solvent in the absence of anion, to the occluded (Up) state upon anion binding. Salicylate competes for the anion-binding site and inhibits the voltage-sensor movement, and therefore inhibits the charge transfer and electromotility by displacing Cl(-) from the anion-binding site and by preventing the structural transitions to the contracted state. In addition, can act as a weak Cl(-)/HCO3(-) antiporter across the cell membrane and so regulate the intracellular pH of the outer hair cells (OHCs), while firstly found as being unable to mediate electrogenic anion transport. Moreover, supports a role in cardiac mechanical amplification serving as an elastic element to enhance the actomyosin- based sarcomere contraction system. This Mus musculus (Mouse) protein is Prestin.